Consider the following 160-residue polypeptide: uncharacterized protein (160 aa).

The chain crosses the membrane as a helical span at residues 137 to 157; the sequence is YNILFVVVILLLLFVAWRCYV.

It is found in the host membrane. It localises to the virion. This is an uncharacterized protein from Acanthamoeba polyphaga mimivirus (APMV).